The sequence spans 86 residues: Large ribosomal subunit protein bL27 (86 aa).

The disordered stretch occupies residues 1-24; that stretch reads MAHKKGTGSTRNGRDSNSKRLGVK.

It belongs to the bacterial ribosomal protein bL27 family.

The protein is Large ribosomal subunit protein bL27 of Prochlorococcus marinus (strain MIT 9312).